The chain runs to 218 residues: MATRSPGVVISDDEPGYDLDLFCIPNHYAEDLERVFIPHGLIMDRTERLARDVMKEMGGHHIVALCVLKGGYKFFADLLDYIKALNRNSDRSIPMTVDFIRLKSYCNDQSTGDTKVIGGDDLSTLTGKNVLIVEDIIDTGKTMQTLLSLVRQYNPKMVKVASLLVKRTPRSVGYKPDFVGFEIPDKFVVGYALDYNEYFRDLNHVCVISETGKAKYKA.

Ala-2 carries the N-acetylalanine modification. Lys-69 contributes to the GMP binding site. An N6-acetyllysine modification is found at Lys-103. Residue Lys-115 forms a Glycyl lysine isopeptide (Lys-Gly) (interchain with G-Cter in SUMO1); alternate linkage. Residue Lys-115 forms a Glycyl lysine isopeptide (Lys-Gly) (interchain with G-Cter in SUMO2); alternate linkage. GMP is bound by residues 134-142 (EDIIDTGKT), Lys-166, 186-188 (KFV), and Asp-194. Asp-138 serves as the catalytic Proton acceptor. Phosphothreonine is present on Thr-142. Residue Asp-194 coordinates Mg(2+).

The protein belongs to the purine/pyrimidine phosphoribosyltransferase family. As to quaternary structure, homotetramer. Requires Mg(2+) as cofactor.

The protein localises to the cytoplasm. The enzyme catalyses IMP + diphosphate = hypoxanthine + 5-phospho-alpha-D-ribose 1-diphosphate. It catalyses the reaction GMP + diphosphate = guanine + 5-phospho-alpha-D-ribose 1-diphosphate. The protein operates within purine metabolism; IMP biosynthesis via salvage pathway; IMP from hypoxanthine: step 1/1. Its function is as follows. Converts guanine to guanosine monophosphate, and hypoxanthine to inosine monophosphate. Transfers the 5-phosphoribosyl group from 5-phosphoribosylpyrophosphate onto the purine. Plays a central role in the generation of purine nucleotides through the purine salvage pathway. The chain is Hypoxanthine-guanine phosphoribosyltransferase (HPRT1) from Pan troglodytes (Chimpanzee).